The chain runs to 330 residues: Flotillin-like protein FloA (330 aa).

2 helical membrane-spanning segments follow: residues 3 to 23 (IISV…TLYM) and 26 to 46 (LRLW…TLIA).

The protein belongs to the flotillin-like FloA family. Homooligomerizes.

It is found in the cell membrane. Its subcellular location is the membrane raft. Functionally, found in functional membrane microdomains (FMM) that may be equivalent to eukaryotic membrane rafts. FMMs are highly dynamic and increase in number as cells age. Flotillins are thought to be important factors in membrane fluidity. The protein is Flotillin-like protein FloA of Sorangium cellulosum (strain So ce56) (Polyangium cellulosum (strain So ce56)).